A 277-amino-acid chain; its full sequence is Methylglyoxal reductase DkgA (277 aa).

The active-site Proton donor is Y51. Residue H107 participates in substrate binding. An NADP(+)-binding site is contributed by 187–241; the sequence is SPLAQGGKGVFDQEIIRKLAQQYNKTPAQIVIRWHLDSGLIVIPKSVTPARIREN.

This sequence belongs to the aldo/keto reductase family. As to quaternary structure, monomer.

Its subcellular location is the cytoplasm. The catalysed reaction is hydroxyacetone + NADP(+) = methylglyoxal + NADPH + H(+). Functionally, aldo-keto reductase that significantly contributes to cellular methylglyoxal detoxification by catalyzing the NADPH-dependent conversion of methylglyoxal to acetol. The protein is Methylglyoxal reductase DkgA of Yersinia pestis.